A 302-amino-acid polypeptide reads, in one-letter code: MNKALKGLGIITTIAMLFVLIGGALVTKTGSGMGCGRSWPLCNGSIFPALTLESIIEWSHRFVSGTSGVLVLALAIWTWKKIGHIRETKFLAVMSVVFLILQALLGAAAVVFGSSALIMALHFGISLISFASVLLLTLLVFEADSKQKSESFYIGKTMQFHMIGIIIYTYVVVYTGAYVRHTSSSLACLDFPMCSTENGWLPGKFHEWVQMGHRAAALLLFAWIIAAAVHAARQYKNQKRIYWGWMISLILIILQAASGIAVVYSRLDLGFALAHAFFISCLFGILCYFLLLVARYRRQVQK.

The Cytoplasmic portion of the chain corresponds to 1-6 (MNKALK). A helical transmembrane segment spans residues 7-27 (GLGIITTIAMLFVLIGGALVT). Residues 28–61 (KTGSGMGCGRSWPLCNGSIFPALTLESIIEWSHR) are Extracellular-facing. A disulfide bond links Cys-35 and Cys-42. The active site involves Glu-57. Residue His-60 coordinates heme o. The chain crosses the membrane as a helical span at residues 62–82 (FVSGTSGVLVLALAIWTWKKI). Topologically, residues 83–91 (GHIRETKFL) are cytoplasmic. A helical membrane pass occupies residues 92-112 (AVMSVVFLILQALLGAAAVVF). At 113–120 (GSSALIMA) the chain is on the extracellular side. The helical transmembrane segment at 121–141 (LHFGISLISFASVLLLTLLVF) threads the bilayer. His-122 contributes to the heme o binding site. At 142-158 (EADSKQKSESFYIGKTM) the chain is on the cytoplasmic side. A helical transmembrane segment spans residues 159–179 (QFHMIGIIIYTYVVVYTGAYV). The Extracellular segment spans residues 180–208 (RHTSSSLACLDFPMCSTENGWLPGKFHEW). A disulfide bridge connects residues Cys-188 and Cys-194. A helical membrane pass occupies residues 209 to 229 (VQMGHRAAALLLFAWIIAAAV). His-213 serves as a coordination point for heme b. The Cytoplasmic segment spans residues 230-242 (HAARQYKNQKRIY). A helical membrane pass occupies residues 243 to 263 (WGWMISLILIILQAASGIAVV). Over 264–272 (YSRLDLGFA) the chain is Extracellular. A helical transmembrane segment spans residues 273–293 (LAHAFFISCLFGILCYFLLLV). Heme b is bound at residue His-275. The Cytoplasmic portion of the chain corresponds to 294–302 (ARYRRQVQK).

It belongs to the COX15/CtaA family. Type 1 subfamily. As to quaternary structure, interacts with CtaB. Heme b is required as a cofactor.

The protein resides in the cell membrane. The enzyme catalyses Fe(II)-heme o + 2 A + H2O = Fe(II)-heme a + 2 AH2. It participates in porphyrin-containing compound metabolism; heme A biosynthesis; heme A from heme O: step 1/1. Functionally, catalyzes the conversion of heme O to heme A by two successive hydroxylations of the methyl group at C8. The first hydroxylation forms heme I, the second hydroxylation results in an unstable dihydroxymethyl group, which spontaneously dehydrates, resulting in the formyl group of heme A. The polypeptide is Heme A synthase (Bacillus licheniformis (strain ATCC 14580 / DSM 13 / JCM 2505 / CCUG 7422 / NBRC 12200 / NCIMB 9375 / NCTC 10341 / NRRL NRS-1264 / Gibson 46)).